A 567-amino-acid chain; its full sequence is Proline--tRNA ligase (567 aa).

It belongs to the class-II aminoacyl-tRNA synthetase family. ProS type 1 subfamily. Homodimer.

It localises to the cytoplasm. The catalysed reaction is tRNA(Pro) + L-proline + ATP = L-prolyl-tRNA(Pro) + AMP + diphosphate. Its function is as follows. Catalyzes the attachment of proline to tRNA(Pro) in a two-step reaction: proline is first activated by ATP to form Pro-AMP and then transferred to the acceptor end of tRNA(Pro). As ProRS can inadvertently accommodate and process non-cognate amino acids such as alanine and cysteine, to avoid such errors it has two additional distinct editing activities against alanine. One activity is designated as 'pretransfer' editing and involves the tRNA(Pro)-independent hydrolysis of activated Ala-AMP. The other activity is designated 'posttransfer' editing and involves deacylation of mischarged Ala-tRNA(Pro). The misacylated Cys-tRNA(Pro) is not edited by ProRS. This is Proline--tRNA ligase from Idiomarina loihiensis (strain ATCC BAA-735 / DSM 15497 / L2-TR).